The primary structure comprises 201 residues: dTTP/UTP pyrophosphatase (201 aa).

D81 functions as the Proton acceptor in the catalytic mechanism.

It belongs to the Maf family. YhdE subfamily. It depends on a divalent metal cation as a cofactor.

The protein resides in the cytoplasm. The catalysed reaction is dTTP + H2O = dTMP + diphosphate + H(+). It carries out the reaction UTP + H2O = UMP + diphosphate + H(+). Functionally, nucleoside triphosphate pyrophosphatase that hydrolyzes dTTP and UTP. May have a dual role in cell division arrest and in preventing the incorporation of modified nucleotides into cellular nucleic acids. This Dechloromonas aromatica (strain RCB) protein is dTTP/UTP pyrophosphatase.